The chain runs to 94 residues: Progonadoliberin-1 (94 aa).

Residues 1 to 22 form the signal peptide; sequence MAAKILALWLLLAGTVFPQGCC. Position 23 is a pyrrolidone carboxylic acid (Gln-23). Gly-32 is modified (glycine amide).

Belongs to the GnRH family. In terms of tissue distribution, synthesized in preoptic neurons and is transported to the pituitary in the preoptic-hypophyseal axons.

The protein localises to the secreted. Functionally, stimulates the secretion of gonadotropins. May be responsible for the regulation of the hypothalamic-pituitary-gonadal axis. The sequence is that of Progonadoliberin-1 (gnrh1) from Haplochromis burtoni (Burton's mouthbrooder).